The chain runs to 210 residues: N-(5'-phosphoribosyl)anthranilate isomerase (210 aa).

This sequence belongs to the TrpF family.

It carries out the reaction N-(5-phospho-beta-D-ribosyl)anthranilate = 1-(2-carboxyphenylamino)-1-deoxy-D-ribulose 5-phosphate. The protein operates within amino-acid biosynthesis; L-tryptophan biosynthesis; L-tryptophan from chorismate: step 3/5. This is N-(5'-phosphoribosyl)anthranilate isomerase from Trichormus variabilis (strain ATCC 29413 / PCC 7937) (Anabaena variabilis).